A 168-amino-acid chain; its full sequence is RNA pyrophosphohydrolase (168 aa).

The Nudix hydrolase domain maps to 8-160; sequence PYRPCVGLAI…KRQVYERVAR (153 aa). The short motif at 47–68 is the Nudix box element; the sequence is GGIDKGEEPYEAALRELYEETS.

This sequence belongs to the Nudix hydrolase family. RppH subfamily. It depends on a divalent metal cation as a cofactor.

Functionally, accelerates the degradation of transcripts by removing pyrophosphate from the 5'-end of triphosphorylated RNA, leading to a more labile monophosphorylated state that can stimulate subsequent ribonuclease cleavage. The protein is RNA pyrophosphohydrolase of Azorhizobium caulinodans (strain ATCC 43989 / DSM 5975 / JCM 20966 / LMG 6465 / NBRC 14845 / NCIMB 13405 / ORS 571).